The following is a 263-amino-acid chain: Shikimate dehydrogenase (NADP(+)) (263 aa).

Shikimate contacts are provided by residues 16–18 (SKS) and Thr65. Catalysis depends on Lys69, which acts as the Proton acceptor. Shikimate contacts are provided by Asn90 and Asp105. NADP(+) contacts are provided by residues 125-129 (GSGGS) and Leu208. Tyr210 contributes to the shikimate binding site. Residue Gly230 participates in NADP(+) binding.

It belongs to the shikimate dehydrogenase family. In terms of assembly, homodimer.

The catalysed reaction is shikimate + NADP(+) = 3-dehydroshikimate + NADPH + H(+). It participates in metabolic intermediate biosynthesis; chorismate biosynthesis; chorismate from D-erythrose 4-phosphate and phosphoenolpyruvate: step 4/7. Its activity is regulated as follows. Inhibited by curcumin, 3-(2-naphthyloxy)-4-oxo-2-(trifluoromethyl)-4H-chromen-7-yl 3-chlorobenzoate, butyl 2-{[3-(2-naphthyloxy)-4-oxo-2-(trifluoromethyl)-4H-chromen-7-yl]oxy}propanoate, 2-({2-[(2-{[2-(2,3-dimethylanilino)-2-oxoethyl]sulfanyl}-1,3-benzothiazol-6-yl)amino]-2-oxoethyl}sulfanyl)-N-(2-naphthyl)acetamide, and maesaquinone diacetate. In terms of biological role, involved in the biosynthesis of the chorismate, which leads to the biosynthesis of aromatic amino acids. Catalyzes the reversible NADPH linked reduction of 3-dehydroshikimate (DHSA) to yield shikimate (SA). It can also use NAD to oxidize shikimate. This Helicobacter pylori (Campylobacter pylori) protein is Shikimate dehydrogenase (NADP(+)).